Consider the following 290-residue polypeptide: GTPase Era (290 aa).

The Era-type G domain occupies 2–169 (KSGFVSIIGR…KDKIYENLQE (168 aa)). The segment at 10-17 (GRPSTGKS) is G1. 10 to 17 (GRPSTGKS) provides a ligand contact to GTP. A G2 region spans residues 36-40 (QTTRN). Residues 57–60 (DTPG) form a G3 region. Residues 57-61 (DTPGF) and 119-122 (NKID) each bind GTP. Residues 119-122 (NKID) are G4. The tract at residues 148 to 150 (ISA) is G5. Positions 200-276 (LKEELPYSLY…DLFLQVKLRK (77 aa)) constitute a KH type-2 domain.

It belongs to the TRAFAC class TrmE-Era-EngA-EngB-Septin-like GTPase superfamily. Era GTPase family. As to quaternary structure, monomer.

Its subcellular location is the cytoplasm. The protein resides in the cell inner membrane. An essential GTPase that binds both GDP and GTP, with rapid nucleotide exchange. Plays a role in 16S rRNA processing and 30S ribosomal subunit biogenesis and possibly also in cell cycle regulation and energy metabolism. This Borrelia turicatae (strain 91E135) protein is GTPase Era.